Reading from the N-terminus, the 259-residue chain is Protein unc-50 homolog (259 aa).

N-acetylmethionine is present on Met1. The Cytoplasmic portion of the chain corresponds to 1-82 (MLPSTSLSSS…TKDQWARDDP (82 aa)). Residue Ser6 is modified to Phosphoserine. A helical membrane pass occupies residues 83-103 (AFLVLLSIWLCVSTIGFGFVL). Residues 104 to 112 (DMGFFETIK) lie on the Lumenal side of the membrane. Residues 113-133 (LLLWVVFIDCVGVGLLISTLM) form a helical membrane-spanning segment. The Cytoplasmic segment spans residues 134 to 163 (WFVSNKYLVKRQSRDYDVEWGYAFDVHLNA). Residues 164–184 (FYPLLVILHFIQLFFINHVIL) form a helical membrane-spanning segment. The Lumenal segment spans residues 185 to 187 (TDT). A helical transmembrane segment spans residues 188-208 (FIGYLVGNTLWLIAVGYYIYV). Residues 209–222 (TFLGYSALPFLKNT) are Cytoplasmic-facing. The helical transmembrane segment at 223 to 243 (VILLYPFAPLMVLYGLSLALG) threads the bilayer. At 244–259 (WNFTHTLCSFYKYRVK) the chain is on the lumenal side.

It belongs to the unc-50 family. As to expression, highly expressed in periodontal ligament and bone marrow, but not in gingival fibroblasts.

The protein resides in the nucleus inner membrane. It localises to the golgi apparatus membrane. In terms of biological role, involved in the cell surface expression of neuronal nicotinic receptors. Binds RNA. This is Protein unc-50 homolog (Unc50) from Mus musculus (Mouse).